The sequence spans 382 residues: Mannitol-1-phosphate 5-dehydrogenase (382 aa).

3–14 (AVHFGAGNIGRG) contacts NAD(+).

It belongs to the mannitol dehydrogenase family.

It catalyses the reaction D-mannitol 1-phosphate + NAD(+) = beta-D-fructose 6-phosphate + NADH + H(+). This is Mannitol-1-phosphate 5-dehydrogenase from Paenarthrobacter aurescens (strain TC1).